We begin with the raw amino-acid sequence, 282 residues long: Aldo-keto reductase MT3049 (282 aa).

Tyrosine 57 serves as the catalytic Proton donor. NADPH is bound by residues leucine 197, valine 235, arginine 237, serine 238, alanine 239, arginine 243, serine 246, asparagine 247, and arginine 273.

The protein belongs to the aldo/keto reductase family.

The chain is Aldo-keto reductase MT3049 from Mycobacterium tuberculosis (strain CDC 1551 / Oshkosh).